The sequence spans 522 residues: Subtilisin-like protease 10 (522 aa).

A signal peptide spans 1 to 19; sequence MFFFKGVVAVLSFFSAVNA. Residues 20–117 constitute a propeptide that is removed on maturation; sequence APFMKPNNGT…VERDQIGTSQ (98 aa). Positions 36–113 constitute an Inhibitor I9 domain; sequence SYIVLLKRDI…HVAHVERDQI (78 aa). Residues 127 to 405 form the Peptidase S8 domain; sequence NWGLGRLSNS…KLLVNGANGT (279 aa). Active-site charge relay system residues include Asp159 and His190. Asn251 carries an N-linked (GlcNAc...) asparagine glycan. The Charge relay system role is filled by Ser348. Residues 383–397 show a composition bias toward polar residues; it reads SASVKNPGPNTTNKL. The disordered stretch occupies residues 383–515; it reads SASVKNPGPN…GWNRPMWWNR (133 aa). Asn392 and Asn403 each carry an N-linked (GlcNAc...) asparagine glycan. Pro residues predominate over residues 432 to 459; the sequence is SQNPPPGQNPPPGQNPPPEQPAPSPPAN.

Belongs to the peptidase S8 family.

It localises to the secreted. Secreted subtilisin-like serine protease with keratinolytic activity that contributes to pathogenicity. This is Subtilisin-like protease 10 (SUB10) from Trichophyton verrucosum (strain HKI 0517).